The sequence spans 262 residues: tRNA (guanine-N(7)-)-methyltransferase (262 aa).

Residues 1–58 (MLPQDTNTDPLPGDDAESASGKSADASQGTPNPGDEVAHPRRIRSFVRRAGRTSTGQQ) form a disordered region. Residues 40–51 (PRRIRSFVRRAG) show a composition bias toward basic residues. Residues Glu92, Glu117, Asp144, and Asp167 each coordinate S-adenosyl-L-methionine. The active site involves Asp167. Residue Lys171 participates in substrate binding. Residues 173–178 (RHNKRR) form an interaction with RNA region. Residues Asp203 and 241–244 (TKFE) each bind substrate.

It belongs to the class I-like SAM-binding methyltransferase superfamily. TrmB family.

It catalyses the reaction guanosine(46) in tRNA + S-adenosyl-L-methionine = N(7)-methylguanosine(46) in tRNA + S-adenosyl-L-homocysteine. It functions in the pathway tRNA modification; N(7)-methylguanine-tRNA biosynthesis. In terms of biological role, catalyzes the formation of N(7)-methylguanine at position 46 (m7G46) in tRNA. The sequence is that of tRNA (guanine-N(7)-)-methyltransferase from Cupriavidus metallidurans (strain ATCC 43123 / DSM 2839 / NBRC 102507 / CH34) (Ralstonia metallidurans).